We begin with the raw amino-acid sequence, 798 residues long: Sodium/hydrogen exchanger 4 (798 aa).

The Cytoplasmic segment spans residues Met-1–Asn-13. An intramembrane region (name=A/M1) is located at residues Cys-14–Ser-28. Topologically, residues Asp-29–Ile-69 are cytoplasmic. The name=B/M2 intramembrane region spans Pro-70–Tyr-90. Topologically, residues His-91–Pro-94 are cytoplasmic. The helical transmembrane segment at Gly-95–Phe-115 threads the bilayer. Residues Gly-116–Ser-127 lie on the Extracellular side of the membrane. Residues Ser-128 to Thr-148 traverse the membrane as a helical segment. Residues Arg-149–Asn-154 are Cytoplasmic-facing. Residues Ile-155 to Leu-175 form a helical membrane-spanning segment. At Ser-176–Asn-196 the chain is on the extracellular side. The helical transmembrane segment at Leu-197–Glu-217 threads the bilayer. Topologically, residues Ala-218–Met-226 are cytoplasmic. Residues Met-227 to Ile-247 form a helical membrane-spanning segment. The Extracellular portion of the chain corresponds to Ala-248 to Phe-270. Residues Ile-271–Ile-291 traverse the membrane as a helical segment. Residues Thr-292–Leu-304 are Cytoplasmic-facing. The helical transmembrane segment at Ile-305 to Ile-325 threads the bilayer. Residues Leu-326–Lys-356 lie on the Extracellular side of the membrane. Asn-342 carries N-linked (GlcNAc...) asparagine glycosylation. A helical membrane pass occupies residues Met-357–Ser-373. At Thr-374–Ala-384 the chain is on the cytoplasmic side. The chain crosses the membrane as a helical span at residues Phe-385–Phe-405. Residues Tyr-406–Asp-420 lie on the Extracellular side of the membrane. The segment at residues Gln-421–Leu-441 is an intramembrane region (name=L). At Pro-442–Lys-450 the chain is on the extracellular side. A helical transmembrane segment spans residues Met-451–Val-471. The Cytoplasmic portion of the chain corresponds to Gly-472 to Lys-798. Disordered regions lie at residues Pro-662–Ser-690 and Arg-776–Lys-798. Residues Gly-784–Lys-798 show a composition bias toward basic residues.

The protein belongs to the monovalent cation:proton antiporter 1 (CPA1) transporter (TC 2.A.36) family. In terms of assembly, homodimer; each protomer has one site for sodium and one site for proton binding. Interacts with CHP1 and CHP2. May be phosphorylated.

It is found in the basolateral cell membrane. The protein localises to the apical cell membrane. It localises to the zymogen granule membrane. The enzyme catalyses Na(+)(in) + H(+)(out) = Na(+)(out) + H(+)(in). It carries out the reaction Na(+)(out) + NH4(+)(in) = Na(+)(in) + NH4(+)(out). Electroneutral antiporter that exchanges sodium for protons or ammonium ions at the basolateral membrane of epithelia to regulate cell volume and intracellular pH upon hypertonic conditions. As part of transcellular ammonia transport in renal tubules, mediates basolateral ammonium extrusion in the medullary thick ascending limb, regulating the corticopapillary ammonium gradient and overall renal acid excretion. Mediates sodium:proton exchange in gastric parietal cells secondary to cAMP-dependent acid secretion and hyperosmolarity. Possibly coupled to chloride:bicarbonate antiporter, enables loading of parietal cells with sodium and chloride ions to maintain cell volume and normal gastric acid secretion. Functions as a sodium sensor in neurons of organum vasculosum of the lamina terminalis where it regulates water intake in response to increased sodium concentration in body fluids. This chain is Sodium/hydrogen exchanger 4 (SLC9A4), found in Homo sapiens (Human).